The following is a 295-amino-acid chain: 2-methylisocitrate lyase (295 aa).

Position 45 to 47 (serine 45 to glycine 47) interacts with substrate. Residues aspartate 85 and aspartate 87 each coordinate Mg(2+). Substrate is bound by residues cysteine 123–glycine 124, arginine 158, glutamate 188, asparagine 210–threonine 212, arginine 241, and arginine 270.

The protein belongs to the isocitrate lyase/PEP mutase superfamily. Methylisocitrate lyase family. As to quaternary structure, homotetramer; dimer of dimers. Mg(2+) is required as a cofactor.

It carries out the reaction (2S,3R)-3-hydroxybutane-1,2,3-tricarboxylate = pyruvate + succinate. The protein operates within organic acid metabolism; propanoate degradation. Its function is as follows. Involved in the catabolism of short chain fatty acids (SCFA) via the 2-methylcitrate cycle I (propionate degradation route). Catalyzes the thermodynamically favored C-C bond cleavage of (2R,3S)-2-methylisocitrate to yield pyruvate and succinate via an alpha-carboxy-carbanion intermediate. This Salmonella typhimurium (strain LT2 / SGSC1412 / ATCC 700720) protein is 2-methylisocitrate lyase.